Consider the following 277-residue polypeptide: Raffinose operon transcriptional regulatory protein RafR (277 aa).

Residues N176–S274 enclose the HTH araC/xylS-type domain. DNA-binding regions (H-T-H motif) lie at residues M193–A214 and V241–S264.

Its function is as follows. Involved in the regulation of the raffinose-operon. In Pediococcus pentosaceus, this protein is Raffinose operon transcriptional regulatory protein RafR (rafR).